The sequence spans 493 residues: Phenmedipham hydrolase (493 aa).

Ser-188 acts as the Acyl-ester intermediate in catalysis. Active-site charge relay system residues include Glu-307 and His-402.

The protein belongs to the type-B carboxylesterase/lipase family. Monomer.

Functionally, may degrade the phenylcarbamate herbicides phenmedipham and desmedipham cometabolically by hydrolyzing their central carbamate linkages. Conveys resistance to the herbicide phenmedipham. This Pseudarthrobacter oxydans (Arthrobacter oxydans) protein is Phenmedipham hydrolase (pcd).